The sequence spans 394 residues: 1-deoxy-D-xylulose 5-phosphate reductoisomerase (394 aa).

Positions 13, 14, 15, 16, and 127 each coordinate NADPH. Lysine 128 is a 1-deoxy-D-xylulose 5-phosphate binding site. NADPH is bound at residue glutamate 129. A Mn(2+)-binding site is contributed by aspartate 153. 1-deoxy-D-xylulose 5-phosphate-binding residues include serine 154, glutamate 155, serine 184, and histidine 207. Glutamate 155 is a binding site for Mn(2+). Position 213 (glycine 213) interacts with NADPH. Residues serine 220, asparagine 225, lysine 226, and glutamate 229 each contribute to the 1-deoxy-D-xylulose 5-phosphate site. Residue glutamate 229 coordinates Mn(2+).

It belongs to the DXR family. Mg(2+) serves as cofactor. The cofactor is Mn(2+).

It carries out the reaction 2-C-methyl-D-erythritol 4-phosphate + NADP(+) = 1-deoxy-D-xylulose 5-phosphate + NADPH + H(+). The protein operates within isoprenoid biosynthesis; isopentenyl diphosphate biosynthesis via DXP pathway; isopentenyl diphosphate from 1-deoxy-D-xylulose 5-phosphate: step 1/6. Catalyzes the NADPH-dependent rearrangement and reduction of 1-deoxy-D-xylulose-5-phosphate (DXP) to 2-C-methyl-D-erythritol 4-phosphate (MEP). The sequence is that of 1-deoxy-D-xylulose 5-phosphate reductoisomerase from Ectopseudomonas mendocina (strain ymp) (Pseudomonas mendocina).